The sequence spans 416 residues: Choline/ethanolaminephosphotransferase 1 (416 aa).

Residues Met-1–Val-20 form a disordered region. Ser-18 is subject to Phosphoserine. Thr-40 bears the Phosphothreonine mark. Position 86 (Asn-86) interacts with CDP-choline. Transmembrane regions (helical) follow at residues Thr-89 to Pro-108 and Leu-116 to Asp-133. Mg(2+) is bound at residue Asp-133. Asn-144 carries N-linked (GlcNAc...) asparagine glycosylation. Glu-151 serves as a coordination point for CDP-choline. Mg(2+) is bound at residue Asp-154. His-155 acts as the Proton acceptor in catalysis. 8 helical membrane-spanning segments follow: residues Gly-156–Gly-176, Asp-180–Gln-199, Ile-210–Gly-230, Met-246–Arg-267, Val-286–Lys-306, His-315–Leu-334, Thr-349–Phe-363, and Asp-368–Cys-388. Asp-158 lines the Mg(2+) pocket.

Belongs to the CDP-alcohol phosphatidyltransferase class-I family. As to quaternary structure, homodimer. Requires Mg(2+) as cofactor. Mn(2+) serves as cofactor.

The protein resides in the endoplasmic reticulum membrane. The protein localises to the nucleus membrane. The catalysed reaction is CDP-ethanolamine + a 1,2-diacyl-sn-glycerol = a 1,2-diacyl-sn-glycero-3-phosphoethanolamine + CMP + H(+). The enzyme catalyses CDP-choline + a 1,2-diacyl-sn-glycerol = a 1,2-diacyl-sn-glycero-3-phosphocholine + CMP + H(+). It catalyses the reaction 1-O-alkyl-2-acyl-sn-glycerol + CDP-choline = a 1-O-alkyl-2-acyl-sn-glycero-3-phosphocholine + CMP + H(+). It carries out the reaction a 1-O-(1Z-alkenyl)-2-acyl-sn-glycerol + CDP-choline = a 1-O-(1Z-alkenyl)-2-acyl-sn-glycero-3-phosphocholine + CMP + H(+). The catalysed reaction is 1,2-dioctanoyl-sn-glycerol + CDP-choline = 1,2-dioctanoyl-sn-glycero-3-phosphocholine + CMP + H(+). The enzyme catalyses 1,2-didecanoyl-sn-glycerol + CDP-choline = 1,2-didecanoyl-sn-glycero-3-phosphocholine + CMP + H(+). It catalyses the reaction CDP-choline + 1,2-di-(9Z-octadecenoyl)-sn-glycerol = 1,2-di-(9Z-octadecenoyl)-sn-glycero-3-phosphocholine + CMP + H(+). It carries out the reaction 1-hexadecanoyl-2-(9Z-octadecenoyl)-sn-glycerol + CDP-choline = 1-hexadecanoyl-2-(9Z-octadecenoyl)-sn-glycero-3-phosphocholine + CMP + H(+). The catalysed reaction is CDP-ethanolamine + 1,2-di-(9Z-octadecenoyl)-sn-glycerol = 1,2-di-(9Z-octadecenoyl)-sn-glycero-3-phosphoethanolamine + CMP + H(+). The enzyme catalyses 1-hexadecanoyl-2-(9Z-octadecenoyl)-sn-glycerol + CDP-ethanolamine = 1-hexadecanoyl-2-(9Z-octadecenoyl)-sn-glycero-3-phosphoethanolamine + CMP + H(+). It catalyses the reaction 1-hexadecanoyl-2-(4Z,7Z,10Z,13Z,16Z,19Z-docosahexaenoyl)-sn-glycerol + CDP-choline = 1-hexadecanoyl-2-(4Z,7Z,10Z,13Z,16Z,19Z-docosahexaenoyl)-sn-glycero-3-phosphocholine + CMP + H(+). It carries out the reaction 1,2-di-(9Z-hexadecenoyl)-sn-glycerol + CDP-choline = 1,2-di-(9Z-hexadecenoyl)-sn-glycero-3-phosphocholine + CMP + H(+). The catalysed reaction is 1,2-di-(9Z-hexadecenoyl)-sn-glycerol + CDP-ethanolamine = 1,2-di-(9Z-hexadecenoyl)-sn-glycero-3-phosphoethanolamine + CMP + H(+). The enzyme catalyses 1-O-hexadecyl-2-acetyl-sn-glycerol + CDP-choline = 1-O-hexadecyl-2-acetyl-sn-glycero-3-phosphocholine + CMP + H(+). It catalyses the reaction 1-O-hexadecyl-2-(5Z,8Z,11Z,14Z-eicosatetraenoyl)-sn-glycerol + CDP-choline = 1-O-hexadecyl-2-(5Z,8Z,11Z,14Z)-eicosatetraenoyl-sn-glycero-3-phosphocholine + CMP + H(+). The protein operates within phospholipid metabolism; phosphatidylethanolamine biosynthesis; phosphatidylethanolamine from ethanolamine: step 3/3. It participates in phospholipid metabolism; phosphatidylcholine biosynthesis; phosphatidylcholine from phosphocholine: step 2/2. In terms of biological role, catalyzes both phosphatidylcholine and phosphatidylethanolamine biosynthesis from CDP-choline and CDP-ethanolamine, respectively. Involved in protein-dependent process of phospholipid transport to distribute phosphatidyl choline to the lumenal surface. Has a higher cholinephosphotransferase activity than ethanolaminephosphotransferase activity. The polypeptide is Choline/ethanolaminephosphotransferase 1 (Mus musculus (Mouse)).